Consider the following 136-residue polypeptide: Large ribosomal subunit protein uL16 (136 aa).

The protein belongs to the universal ribosomal protein uL16 family. As to quaternary structure, part of the 50S ribosomal subunit.

Binds 23S rRNA and is also seen to make contacts with the A and possibly P site tRNAs. This is Large ribosomal subunit protein uL16 from Rickettsia felis (strain ATCC VR-1525 / URRWXCal2) (Rickettsia azadi).